Here is a 260-residue protein sequence, read N- to C-terminus: Imidazole glycerol phosphate synthase subunit HisF (260 aa).

Active-site residues include Asp-11 and Asp-130.

It belongs to the HisA/HisF family. Heterodimer of HisH and HisF.

The protein localises to the cytoplasm. The enzyme catalyses 5-[(5-phospho-1-deoxy-D-ribulos-1-ylimino)methylamino]-1-(5-phospho-beta-D-ribosyl)imidazole-4-carboxamide + L-glutamine = D-erythro-1-(imidazol-4-yl)glycerol 3-phosphate + 5-amino-1-(5-phospho-beta-D-ribosyl)imidazole-4-carboxamide + L-glutamate + H(+). Its pathway is amino-acid biosynthesis; L-histidine biosynthesis; L-histidine from 5-phospho-alpha-D-ribose 1-diphosphate: step 5/9. Its function is as follows. IGPS catalyzes the conversion of PRFAR and glutamine to IGP, AICAR and glutamate. The HisF subunit catalyzes the cyclization activity that produces IGP and AICAR from PRFAR using the ammonia provided by the HisH subunit. This Endomicrobium trichonymphae protein is Imidazole glycerol phosphate synthase subunit HisF.